A 604-amino-acid polypeptide reads, in one-letter code: Rhotekin-2 (604 aa).

One can recognise an REM-1 domain in the interval methionine 1–asparagine 74. Residues valine 53–arginine 79 are a coiled coil. In terms of domain architecture, PH spans alanine 281 to phenylalanine 387. Residues leucine 481–isoleucine 590 are disordered. A compositionally biased stretch (polar residues) spans glycine 514 to glycine 527. Residues serine 529–proline 543 show a composition bias toward low complexity.

May play an important role in lymphopoiesis. The chain is Rhotekin-2 (Rtkn2) from Mus musculus (Mouse).